We begin with the raw amino-acid sequence, 293 residues long: MAIVSAEKFVQAARDNGYAVGGFNTNNLEWTQAILRAAEAKKAPVLIQTSMGAAKYMGGYKVARNLIANLVESMGITVPVAIHLDHGHYEDALECIEVGYTSIMFDGSHLPVEENLKLAKEVVEKAHAKGISVEAEVGTIGGEEDGIIGKGELAPIEDAKAMVETGIDFLAAGIGNIHGPYPVNWEGLDLDHLQKLTEALPGFPIVLHGGSGIPDEQIQAAIKLGVAKVNVNTECQIAFANATRKFARDYEANEAEYDKKKLFDPRKFLADGVKAIQASVEERIDVFGSEGKA.

S50 lines the D-glyceraldehyde 3-phosphate pocket. Residue D85 is the Proton donor of the active site. Residues H86, D106, E136, and H178 each contribute to the Zn(2+) site. G179 is a dihydroxyacetone phosphate binding site. H208 is a binding site for Zn(2+). Dihydroxyacetone phosphate contacts are provided by residues 209–211 (GGS) and 230–233 (NVNT).

Belongs to the class II fructose-bisphosphate aldolase family. The cofactor is Zn(2+).

It catalyses the reaction beta-D-fructose 1,6-bisphosphate = D-glyceraldehyde 3-phosphate + dihydroxyacetone phosphate. It functions in the pathway carbohydrate degradation; glycolysis; D-glyceraldehyde 3-phosphate and glycerone phosphate from D-glucose: step 4/4. Catalyzes the aldol condensation of dihydroxyacetone phosphate (DHAP or glycerone-phosphate) with glyceraldehyde 3-phosphate (G3P) to form fructose 1,6-bisphosphate (FBP) in gluconeogenesis and the reverse reaction in glycolysis. In Streptococcus pneumoniae serotype 4 (strain ATCC BAA-334 / TIGR4), this protein is Fructose-bisphosphate aldolase (fba).